The primary structure comprises 61 residues: Mu-diguetoxin-Dc1c (61 aa).

3 disulfides stabilise this stretch: Cys12/Cys25, Cys19/Cys39, and Cys24/Cys53.

Belongs to the neurotoxin 26 (DTX) family. Expressed by the venom gland.

The protein localises to the secreted. In terms of biological role, acts by delaying the inactivation of presynaptic voltage-sensitive sodium channels (Nav). Acts against insects and causes a progressive spastic paralysis. The protein is Mu-diguetoxin-Dc1c of Diguetia canities (Desert bush spider).